Consider the following 361-residue polypeptide: S-adenosylmethionine decarboxylase proenzyme (361 aa).

Catalysis depends on residues glutamate 11 and glutamate 14. Serine 71 functions as the Schiff-base intermediate with substrate; via pyruvic acid in the catalytic mechanism. Residue serine 71 is modified to Pyruvic acid (Ser); by autocatalysis. Cysteine 85 (proton donor; for catalytic activity) is an active-site residue. Active-site proton acceptor; for processing activity residues include serine 234 and histidine 247.

It belongs to the eukaryotic AdoMetDC family. It depends on pyruvate as a cofactor. In terms of processing, is synthesized initially as an inactive proenzyme. Formation of the active enzyme involves a self-maturation process in which the active site pyruvoyl group is generated from an internal serine residue via an autocatalytic post-translational modification. Two non-identical subunits are generated from the proenzyme in this reaction, and the pyruvate is formed at the N-terminus of the alpha chain, which is derived from the carboxyl end of the proenzyme. The post-translation cleavage follows an unusual pathway, termed non-hydrolytic serinolysis, in which the side chain hydroxyl group of the serine supplies its oxygen atom to form the C-terminus of the beta chain, while the remainder of the serine residue undergoes an oxidative deamination to produce ammonia and the pyruvoyl group blocking the N-terminus of the alpha chain.

The enzyme catalyses S-adenosyl-L-methionine + H(+) = S-adenosyl 3-(methylsulfanyl)propylamine + CO2. Its pathway is amine and polyamine biosynthesis; S-adenosylmethioninamine biosynthesis; S-adenosylmethioninamine from S-adenosyl-L-methionine: step 1/1. The chain is S-adenosylmethionine decarboxylase proenzyme (SAMDC) from Daucus carota (Wild carrot).